Here is a 104-residue protein sequence, read N- to C-terminus: Large ribosomal subunit protein bL21 (104 aa).

The protein belongs to the bacterial ribosomal protein bL21 family. As to quaternary structure, part of the 50S ribosomal subunit. Contacts protein L20.

In terms of biological role, this protein binds to 23S rRNA in the presence of protein L20. This chain is Large ribosomal subunit protein bL21, found in Francisella tularensis subsp. holarctica (strain FTNF002-00 / FTA).